The primary structure comprises 282 residues: Hepatitis A virus cellular receptor 2 homolog (282 aa).

The N-terminal stretch at 1–21 (MFSWLPFSCALLLLQPLPARS) is a signal peptide. In terms of domain architecture, Ig-like V-type spans 22–131 (LENAYTAEVG…EKLELKLSIT (110 aa)). At 22-194 (LENAYTAEVG…KDSGETIRTA (173 aa)) the chain is on the extracellular side. 3 cysteine pairs are disulfide-bonded: cysteine 38–cysteine 111, cysteine 52–cysteine 63, and cysteine 58–cysteine 110. Position 62 (glutamine 62) interacts with a 1,2-diacyl-sn-glycero-3-phospho-L-serine. Asparagine 74 and asparagine 100 each carry an N-linked (GlcNAc...) asparagine glycan. Arginine 112 provides a ligand contact to a 1,2-diacyl-sn-glycero-3-phospho-L-serine. Residues phenylalanine 115 and glycine 117 each coordinate Ca(2+). Methionine 119 provides a ligand contact to a 1,2-diacyl-sn-glycero-3-phospho-L-serine. Asparagine 120 is a binding site for Ca(2+). The tract at residues 138–163 (PAGTAHGDSTTASPRTLTTEGSGSET) is disordered. The segment covering 144–163 (GDSTTASPRTLTTEGSGSET) has biased composition (polar residues). Threonine 147 is a glycosylation site (O-linked (GalNAc...) threonine). N-linked (GlcNAc...) asparagine glycosylation occurs at asparagine 173. Residues 195-215 (VHIGVGVSAGLALALILGVLI) form a helical membrane-spanning segment. Over 216–282 (LKWYSSKKKK…YCYVSSQQPS (67 aa)) the chain is Cytoplasmic. Residues 253–271 (EENIYTIEENIYEMENSNE) form an interaction with BAG6 region. Tyrosine 257 carries the post-translational modification Phosphotyrosine; by ITK.

This sequence belongs to the immunoglobulin superfamily. TIM family. As to quaternary structure, interacts with HMGB1; impairs HMGB1 binding to B-DNA and likely HMGB1-mediated innate immune response. Interacts with BAG6. Interacts (phosphorylated) with PIK3R1 and PIK3R2. Interacts (not dependent on its phosphorylation status) with FYN. Interacts (in basal state T-cells) with VAV1; AKT1/2, LCP2, ZAP70, SYK, PIK3R1, FYN, SH3BP2 and SH2D2A. Interacts (in activated T-cells) with LCK and PLCG. Interacts with ILF3; this interaction promotes ILF3 ubiquitination and degradation.

The protein localises to the membrane. It is found in the cell junction. Functionally, cell surface receptor implicated in modulating innate and adaptive immune responses. Generally accepted to have an inhibiting function. Reports on stimulating functions suggest that the activity may be influenced by the cellular context and/or the respective ligand. Regulates macrophage activation. Inhibits T-helper type 1 lymphocyte (Th1)-mediated auto- and alloimmune responses and promotes immunological tolerance. In CD8+ cells attenuates TCR-induced signaling, specifically by blocking NF-kappaB and NFAT promoter activities resulting in the loss of IL-2 secretion. The function may implicate its association with LCK proposed to impair phosphorylation of TCR subunits. In contrast, shown to activate TCR-induced signaling in T-cells probably implicating ZAP70, LCP2, LCK and FYN. Expressed on Treg cells can inhibit Th17 cell responses. Receptor for LGALS9. Binding to LGALS9 is believed to result in suppression of T-cell responses; the resulting apoptosis of antigen-specific cells may implicate HAVCR2 phosphorylation and disruption of its association with BAG6. Binding to LGALS9 is proposed to be involved in innate immune response to intracellular pathogens. Expressed on Th1 cells interacts with LGALS9 expressed on Mycobacterium tuberculosis-infected macrophages to stimulate antibactericidal activity including IL-1 beta secretion and to restrict intracellular bacterial growth. However, the function as receptor for LGALS9 has been challenged. Also reported to enhance CD8+ T cell responses to an acute infection such as by Listeria monocytogenes. Receptor for phosphatidylserine (PtSer); PtSer-binding is calcium-dependent. May recognize PtSer on apoptotic cells leading to their phagocytosis. Mediates the engulfment of apoptotic cells by dendritic cells. Expressed on T-cells, promotes conjugation but not engulfment of apoptotic cells. Expressed on dendritic cells (DCs) positively regulates innate immune response and in synergy with Toll-like receptors promotes secretion of TNF-alpha. In tumor-imfiltrating DCs suppresses nucleic acid-mediated innate immune repsonse by interaction with HMGB1 and interfering with nucleic acid-sensing and trafficking of nucleid acids to endosomes. Can enhance mast cell production of Th2 cytokines Il-4, IL-6 and IL-13. Expressed on natural killer (NK) cells acts as a coreceptor to enhance IFN-gamma production in response to LGALS9. In contrast, shown to suppress NK cell-mediated cytotoxicity. Negatively regulates NK cell function in LPS-induced endotoxic shock. This chain is Hepatitis A virus cellular receptor 2 homolog (Havcr2), found in Rattus norvegicus (Rat).